The following is a 511-amino-acid chain: MENNELVLVLDFGSQYNQLITRRIREFGVYSELHSHKLTAEEIKEMNPKGIILSGGPHSVYDENSFRCDEGIFELGIPVLGICYGMQLMSLHYDGKVERSKNREYGKALIELDGEPVLFKDTPKGQTVWMSHGDKVTAAPPSFNIDATSPSTPIAAISNVEKNLYGVQFHPEVRHTEYGNDLLNRFVFDVCGCTGDWSIENFIDMEVEKIQETVGDRKVLCALSGGVDSSVVAALIHKAIGDQLTCIFVDHGLLRKNEGDDVMKVFAEDFQMNIIKVDAKDRFLFKLEGVSDPELKRKIIGNEFIYVFDDEASKLKDIDFLAQGTLYTDVIESGTDTAQTIKSHHNVGGLPEDMQFTLIEPLNTLFKDEVRELGSQLGVPDRIVWRQPFPGPGLAIRILGEVTEEHLEIVRESDAILREEIAKAGLDRDIWQYFTVLPNIKSVGVMGDARTYAHTIGIRAVTSIDGMTSDWARIPWDVLERISTRLVNDVDNINRVVYDVTSKPPATIEWE.

Residues 6-196 (LVLVLDFGSQ…VFDVCGCTGD (191 aa)) form the Glutamine amidotransferase type-1 domain. C83 acts as the Nucleophile in catalysis. Catalysis depends on residues H170 and E172. The 190-residue stretch at 197 to 386 (WSIENFIDME…LGVPDRIVWR (190 aa)) folds into the GMPS ATP-PPase domain. 224-230 (SGGVDSS) is a binding site for ATP.

Homodimer.

The enzyme catalyses XMP + L-glutamine + ATP + H2O = GMP + L-glutamate + AMP + diphosphate + 2 H(+). It participates in purine metabolism; GMP biosynthesis; GMP from XMP (L-Gln route): step 1/1. In terms of biological role, catalyzes the synthesis of GMP from XMP. The protein is GMP synthase [glutamine-hydrolyzing] of Oceanobacillus iheyensis (strain DSM 14371 / CIP 107618 / JCM 11309 / KCTC 3954 / HTE831).